The following is a 198-amino-acid chain: MGAWSGFGITFETMFRKSFTQGYPEKGKEKPMPPRMHGRHQLNRWPDGLEKCVGCELCAWACPADAIYVEGADNTDEERYSPGERYGRVYEINYLRCILCGMCIEACPTRALTMTNDFKMADTSRAKHIWTKDELLAPLKEGMEQPPHPRRLGDDEDDYFNGLPPSGQDDVRTGPANSGATAHRDDDNDTQHKDEEAA.

4Fe-4S ferredoxin-type domains lie at 42 to 72 (LNRWPDGLEKCVGCELCAWACPADAIYVEGA) and 88 to 117 (RVYEINYLRCILCGMCIEACPTRALTMTND). Residues Cys-52, Cys-55, Cys-58, Cys-62, Cys-97, Cys-100, Cys-103, and Cys-107 each contribute to the [4Fe-4S] cluster site. The tract at residues 137–198 (APLKEGMEQP…DTQHKDEEAA (62 aa)) is disordered. A compositionally biased stretch (basic and acidic residues) spans 182–198 (AHRDDDNDTQHKDEEAA).

Belongs to the complex I 23 kDa subunit family. In terms of assembly, NDH-1 is composed of 14 different subunits. Subunits NuoA, H, J, K, L, M, N constitute the membrane sector of the complex. The cofactor is [4Fe-4S] cluster.

It is found in the cell membrane. It carries out the reaction a quinone + NADH + 5 H(+)(in) = a quinol + NAD(+) + 4 H(+)(out). Its function is as follows. NDH-1 shuttles electrons from NADH, via FMN and iron-sulfur (Fe-S) centers, to quinones in the respiratory chain. The immediate electron acceptor for the enzyme in this species is believed to be ubiquinone. Couples the redox reaction to proton translocation (for every two electrons transferred, four hydrogen ions are translocated across the cytoplasmic membrane), and thus conserves the redox energy in a proton gradient. In Cutibacterium acnes (strain DSM 16379 / KPA171202) (Propionibacterium acnes), this protein is NADH-quinone oxidoreductase subunit I.